The sequence spans 393 residues: Dual-specificity RNA methyltransferase RlmN (393 aa).

The active-site Proton acceptor is Glu-115. The 245-residue stretch at 121–365 (EEDRGTLCIS…APIRKTRGDD (245 aa)) folds into the Radical SAM core domain. A disulfide bridge links Cys-128 with Cys-370. [4Fe-4S] cluster-binding residues include Cys-135, Cys-139, and Cys-142. S-adenosyl-L-methionine contacts are provided by residues 194-195 (GE), Ser-226, 248-250 (SFH), and Asn-327. Cys-370 acts as the S-methylcysteine intermediate in catalysis.

Belongs to the radical SAM superfamily. RlmN family. The cofactor is [4Fe-4S] cluster.

The protein localises to the cytoplasm. It carries out the reaction adenosine(2503) in 23S rRNA + 2 reduced [2Fe-2S]-[ferredoxin] + 2 S-adenosyl-L-methionine = 2-methyladenosine(2503) in 23S rRNA + 5'-deoxyadenosine + L-methionine + 2 oxidized [2Fe-2S]-[ferredoxin] + S-adenosyl-L-homocysteine. It catalyses the reaction adenosine(37) in tRNA + 2 reduced [2Fe-2S]-[ferredoxin] + 2 S-adenosyl-L-methionine = 2-methyladenosine(37) in tRNA + 5'-deoxyadenosine + L-methionine + 2 oxidized [2Fe-2S]-[ferredoxin] + S-adenosyl-L-homocysteine. Its function is as follows. Specifically methylates position 2 of adenine 2503 in 23S rRNA and position 2 of adenine 37 in tRNAs. m2A2503 modification seems to play a crucial role in the proofreading step occurring at the peptidyl transferase center and thus would serve to optimize ribosomal fidelity. This is Dual-specificity RNA methyltransferase RlmN from Ruegeria pomeroyi (strain ATCC 700808 / DSM 15171 / DSS-3) (Silicibacter pomeroyi).